Consider the following 198-residue polypeptide: Ribonuclease HII (198 aa).

One can recognise an RNase H type-2 domain in the interval Glu6–Asp198. Asp12, Glu13, and Asp108 together coordinate a divalent metal cation.

The protein belongs to the RNase HII family. Requires Mn(2+) as cofactor. Mg(2+) serves as cofactor.

It localises to the cytoplasm. The catalysed reaction is Endonucleolytic cleavage to 5'-phosphomonoester.. In terms of biological role, endonuclease that specifically degrades the RNA of RNA-DNA hybrids. The chain is Ribonuclease HII from Acaryochloris marina (strain MBIC 11017).